A 335-amino-acid chain; its full sequence is Methionine import ATP-binding protein MetN (335 aa).

The 240-residue stretch at 2–241 (IEFQRLHKSY…PKHVTTRRFV (240 aa)) folds into the ABC transporter domain. 38-45 (GHSGAGKS) serves as a coordination point for ATP.

It belongs to the ABC transporter superfamily. Methionine importer (TC 3.A.1.24) family. The complex is composed of two ATP-binding proteins (MetN), two transmembrane proteins (MetI) and a solute-binding protein (MetQ).

Its subcellular location is the cell inner membrane. The enzyme catalyses L-methionine(out) + ATP + H2O = L-methionine(in) + ADP + phosphate + H(+). It carries out the reaction D-methionine(out) + ATP + H2O = D-methionine(in) + ADP + phosphate + H(+). Functionally, part of the ABC transporter complex MetNIQ involved in methionine import. Responsible for energy coupling to the transport system. The polypeptide is Methionine import ATP-binding protein MetN (Xanthomonas oryzae pv. oryzae (strain KACC10331 / KXO85)).